The sequence spans 175 residues: Adenylate kinase isoenzyme 6 homolog (175 aa).

ATP is bound by residues G18, G20, K21, T22, and T23. An NMPbind region spans residues 38-61 (CIGDVVKENHLHFGFDEKWKTYDV). The tract at residues 113–123 (SRGYSLEKIQE) is LID. Residue R114 coordinates ATP.

It belongs to the adenylate kinase family. AK6 subfamily. In terms of assembly, interacts with small ribosomal subunit protein uS11. Not a structural component of 43S pre-ribosomes, but transiently interacts with them by binding to uS11.

It localises to the cytoplasm. The protein resides in the nucleus. The catalysed reaction is AMP + ATP = 2 ADP. It carries out the reaction ATP + H2O = ADP + phosphate + H(+). Broad-specificity nucleoside monophosphate (NMP) kinase that catalyzes the reversible transfer of the terminal phosphate group between nucleoside triphosphates and monophosphates. Also has ATPase activity. Involved in the late cytoplasmic maturation steps of the 40S ribosomal particles, specifically 18S rRNA maturation. While NMP activity is not required for ribosome maturation, ATPase activity is. Associates transiently with small ribosomal subunit protein uS11. ATP hydrolysis breaks the interaction with uS11. May temporarily remove uS11 from the ribosome to enable a conformational change of the ribosomal RNA that is needed for the final maturation step of the small ribosomal subunit. Its NMP activity may have a role in nuclear energy homeostasis. This is Adenylate kinase isoenzyme 6 homolog (fap7) from Schizosaccharomyces pombe (strain 972 / ATCC 24843) (Fission yeast).